We begin with the raw amino-acid sequence, 363 residues long: 2,5-diketocamphane 1,2-monooxygenase 2 (363 aa).

FMN is bound by residues M74 and 186 to 194; that span reads TGLTKNSSS.

This sequence belongs to the bacterial luciferase oxidoreductase family. Homodimer. Likely forms a loose transient complex with a P.putida flavin reductase that provides the required FMNH(2) to the enzyme.

It carries out the reaction (1R,4R)-bornane-2,5-dione + FMNH2 + O2 = (1R,4R)-5-oxo-1,2-campholide + FMN + H2O + H(+). Its pathway is terpene metabolism; (R)-camphor degradation. Its function is as follows. Involved in the degradation and assimilation of (+)-camphor, which allows P.putida strain NCIMB 10007 to grow on this enantiomer of camphor as the sole carbon source. Catalyzes the FMNH(2)-dependent lactonization of 2,5-diketocamphane via a Baeyer-Villiger oxidation to produce the unstable lactone 5-oxo-1,2-campholide with (R,R) configuration, that presumably undergoes spontaneous hydrolysis to form 2-oxo-Delta(3)-4,5,5-trimethylcyclopentenylacetate. Is also able to convert (+)-camphor and norcamphor to the corresponding lactone in vitro. Shows no conversion of (-)-camphor, (+)-fenchone, (-)-fenchone, and (+)-nopinone. Acts on other bicyclic ketones and, to a lesser extent, on some 2- and 4-substituted monocyclic ketones. The polypeptide is 2,5-diketocamphane 1,2-monooxygenase 2 (Pseudomonas putida (Arthrobacter siderocapsulatus)).